Consider the following 453-residue polypeptide: Glutamyl-tRNA(Gln) amidotransferase subunit A (453 aa).

Catalysis depends on charge relay system residues Lys53 and Ser128. Ser152 (acyl-ester intermediate) is an active-site residue.

It belongs to the amidase family. GatA subfamily. In terms of assembly, heterotrimer of A, B and C subunits.

The catalysed reaction is L-glutamyl-tRNA(Gln) + L-glutamine + ATP + H2O = L-glutaminyl-tRNA(Gln) + L-glutamate + ADP + phosphate + H(+). Allows the formation of correctly charged Gln-tRNA(Gln) through the transamidation of misacylated Glu-tRNA(Gln) in organisms which lack glutaminyl-tRNA synthetase. The reaction takes place in the presence of glutamine and ATP through an activated gamma-phospho-Glu-tRNA(Gln). This is Glutamyl-tRNA(Gln) amidotransferase subunit A from Helicobacter pylori (strain G27).